Consider the following 374-residue polypeptide: Flagellar P-ring protein (374 aa).

An N-terminal signal peptide occupies residues 1 to 29 (MSGLGFTGVVRIAVMALLALAFLGAPAHA). The segment covering 296-311 (ESPQVSQPNPLSNGRT) has biased composition (polar residues). Residues 296 to 316 (ESPQVSQPNPLSNGRTVMTPR) are disordered.

Belongs to the FlgI family. As to quaternary structure, the basal body constitutes a major portion of the flagellar organelle and consists of four rings (L,P,S, and M) mounted on a central rod.

The protein localises to the periplasm. It localises to the bacterial flagellum basal body. Functionally, assembles around the rod to form the L-ring and probably protects the motor/basal body from shearing forces during rotation. This is Flagellar P-ring protein from Nitrobacter winogradskyi (strain ATCC 25391 / DSM 10237 / CIP 104748 / NCIMB 11846 / Nb-255).